The sequence spans 619 residues: 1-deoxy-D-xylulose-5-phosphate synthase (619 aa).

Residues histidine 76 and 117-119 (AHS) contribute to the thiamine diphosphate site. Aspartate 148 contacts Mg(2+). Thiamine diphosphate-binding positions include 149-150 (GA), asparagine 177, tyrosine 284, and glutamate 366. Asparagine 177 provides a ligand contact to Mg(2+).

It belongs to the transketolase family. DXPS subfamily. Homodimer. Mg(2+) is required as a cofactor. The cofactor is thiamine diphosphate.

The enzyme catalyses D-glyceraldehyde 3-phosphate + pyruvate + H(+) = 1-deoxy-D-xylulose 5-phosphate + CO2. The protein operates within metabolic intermediate biosynthesis; 1-deoxy-D-xylulose 5-phosphate biosynthesis; 1-deoxy-D-xylulose 5-phosphate from D-glyceraldehyde 3-phosphate and pyruvate: step 1/1. Functionally, catalyzes the acyloin condensation reaction between C atoms 2 and 3 of pyruvate and glyceraldehyde 3-phosphate to yield 1-deoxy-D-xylulose-5-phosphate (DXP). The polypeptide is 1-deoxy-D-xylulose-5-phosphate synthase (Azoarcus sp. (strain BH72)).